A 451-amino-acid polypeptide reads, in one-letter code: Phosphoglucosamine mutase (451 aa).

Catalysis depends on serine 107, which acts as the Phosphoserine intermediate. Residues serine 107, aspartate 246, aspartate 248, and aspartate 250 each coordinate Mg(2+). Phosphoserine is present on serine 107.

The protein belongs to the phosphohexose mutase family. The cofactor is Mg(2+). Post-translationally, activated by phosphorylation.

It carries out the reaction alpha-D-glucosamine 1-phosphate = D-glucosamine 6-phosphate. Functionally, catalyzes the conversion of glucosamine-6-phosphate to glucosamine-1-phosphate. This is Phosphoglucosamine mutase from Burkholderia lata (strain ATCC 17760 / DSM 23089 / LMG 22485 / NCIMB 9086 / R18194 / 383).